Reading from the N-terminus, the 1107-residue chain is Copine family protein 1 (1107 aa).

Over 1–22 (MVFDARLGYDPDEWEECPEPEH) the chain is Extracellular. A helical membrane pass occupies residues 23–45 (FLVFSGFTRYMLTFAAIAFVYYF). The Cytoplasmic portion of the chain corresponds to 46–1107 (FKLLDDKNKK…IRREMMHNPL (1062 aa)). A coiled-coil region spans residues 67-124 (VESVLAKAGDKLHDVKEQVQQHIPESAEELMREADQYLKEQAHSVQNNVHQFAEQAAN). The segment covering 478 to 488 (QLQQNQQQHQQ) has biased composition (low complexity). Disordered stretches follow at residues 478-501 (QLQQ…TADS) and 673-698 (HEPE…SRQV). Residues 492 to 501 (IDRRRTTADS) show a composition bias toward basic and acidic residues. Over residues 687-698 (KNPSFEATSRQV) the composition is skewed to polar residues. One can recognise a VWFA domain in the interval 863–1023 (NLIFGIDYTA…LSIIVVGVGD (161 aa)).

It belongs to the copine family. In terms of assembly, may interact (via VWFA domain) with unc-89 (via Ig-like C2-type 1-3) and unc-96 (via C-terminus); cpna-1 binding sites for unc-89 and unc-96 are different. May interact with pat-6. May interact with lim-9 (via LIM domains) and with scpl-1 (via FCP1 homology domain). Expressed in body wall muscles (at protein level).

Its subcellular location is the basal cell membrane. It localises to the cytoplasm. The protein resides in the myofibril. It is found in the sarcomere. The protein localises to the m line. Its function is as follows. Involved in the assembly of dense bodies and M lines during body wall muscle development. Acts by recruiting downstream of integrin-associated protein pat-6/actopaxin several dense bodies and M line components including unc-89, lim-9, scpl-1 and unc-96 to integrin-mediated attachment sites. This chain is Copine family protein 1, found in Caenorhabditis elegans.